The chain runs to 560 residues: Hemocyanin, units G and H (560 aa).

Cys1 and Cys11 are disulfide-bonded. The tract at residues 1-184 (CPTPDAPQYA…AKGLVSQHIE (184 aa)) is unit G. Positions 12 to 14 (CLH) form a cross-link, 2'-(S-cysteinyl)-histidine (Cys-His). Cys93 and Cys98 are oxidised to a cystine. Asn142 carries an N-linked (GlcNAc...) asparagine glycan. The unit H stretch occupies residues 185–560 (DHDTETLIRK…KPGTGTQLTR (376 aa)). His230 is a Cu cation binding site. Cys236 and Cys246 are disulfide-bonded. A glycan (N-linked (GlcNAc...) asparagine) is linked at Asn240. A cross-link (2'-(S-cysteinyl)-histidine (Cys-His)) is located at residues 247–249 (CQH). Cu cation-binding residues include His249, His258, His358, His362, and His389. 2 cysteine pairs are disulfide-bonded: Cys348-Cys415 and Cys476-Cys482.

This sequence belongs to the tyrosinase family. Hemocyanin subfamily. In terms of assembly, decamers of large identical subunits (390 kDa), each containing 8 globular oxygen-binding functional units. Cu(2+) serves as cofactor.

Functionally, hemocyanins are copper-containing oxygen carriers occurring freely dissolved in the hemolymph of many mollusks and arthropods. The protein is Hemocyanin, units G and H of Sepia officinalis (Common cuttlefish).